Here is a 336-residue protein sequence, read N- to C-terminus: Biotin synthase (336 aa).

One can recognise a Radical SAM core domain in the interval 52-279; that stretch reads KAIQLSTLMS…KSYVRLSAGR (228 aa). The [4Fe-4S] cluster site is built by C67, C71, and C74. The [2Fe-2S] cluster site is built by C111, C142, C202, and R274.

The protein belongs to the radical SAM superfamily. Biotin synthase family. As to quaternary structure, homodimer. [4Fe-4S] cluster serves as cofactor. It depends on [2Fe-2S] cluster as a cofactor.

The enzyme catalyses (4R,5S)-dethiobiotin + (sulfur carrier)-SH + 2 reduced [2Fe-2S]-[ferredoxin] + 2 S-adenosyl-L-methionine = (sulfur carrier)-H + biotin + 2 5'-deoxyadenosine + 2 L-methionine + 2 oxidized [2Fe-2S]-[ferredoxin]. Its pathway is cofactor biosynthesis; biotin biosynthesis; biotin from 7,8-diaminononanoate: step 2/2. Catalyzes the conversion of dethiobiotin (DTB) to biotin by the insertion of a sulfur atom into dethiobiotin via a radical-based mechanism. The polypeptide is Biotin synthase (Pasteurella multocida (strain Pm70)).